Reading from the N-terminus, the 262-residue chain is Hydroxyethylthiazole kinase (262 aa).

Position 50 (Met50) interacts with substrate. Residues Arg125 and Thr171 each coordinate ATP. Gly198 provides a ligand contact to substrate.

The protein belongs to the Thz kinase family. Requires Mg(2+) as cofactor.

It catalyses the reaction 5-(2-hydroxyethyl)-4-methylthiazole + ATP = 4-methyl-5-(2-phosphooxyethyl)-thiazole + ADP + H(+). The protein operates within cofactor biosynthesis; thiamine diphosphate biosynthesis; 4-methyl-5-(2-phosphoethyl)-thiazole from 5-(2-hydroxyethyl)-4-methylthiazole: step 1/1. Functionally, catalyzes the phosphorylation of the hydroxyl group of 4-methyl-5-beta-hydroxyethylthiazole (THZ). The polypeptide is Hydroxyethylthiazole kinase (Escherichia coli (strain 55989 / EAEC)).